Reading from the N-terminus, the 197-residue chain is Putative glutathione-dependent formaldehyde-activating enzyme (197 aa).

A CENP-V/GFA domain is found at 22–171 (FPGGKLYCHC…LKSLGLENYD (150 aa)). The Zn(2+) site is built by Cys-29, Cys-31, Cys-50, Cys-52, Cys-55, Cys-97, and Cys-100.

Belongs to the Gfa family. Zn(2+) is required as a cofactor.

It carries out the reaction S-(hydroxymethyl)glutathione = glutathione + formaldehyde. Its pathway is one-carbon metabolism; formaldehyde degradation; formate from formaldehyde (glutathione route): step 1/3. Its function is as follows. Catalyzes the condensation of formaldehyde and glutathione to S-hydroxymethylglutathione. The chain is Putative glutathione-dependent formaldehyde-activating enzyme from Emericella nidulans (strain FGSC A4 / ATCC 38163 / CBS 112.46 / NRRL 194 / M139) (Aspergillus nidulans).